We begin with the raw amino-acid sequence, 259 residues long: Probable dihydroorotate dehydrogenase B (NAD(+)), electron transfer subunit (259 aa).

One can recognise an FAD-binding FR-type domain in the interval 1–89 (MLPLNATITQ…RGPFGKGFTL (89 aa)). Residues Cys-211, Cys-216, Cys-219, and Cys-229 each contribute to the [2Fe-2S] cluster site.

It belongs to the PyrK family. As to quaternary structure, heterotetramer of 2 PyrK and 2 PyrD type B subunits. The cofactor is [2Fe-2S] cluster. Requires FAD as cofactor.

It functions in the pathway pyrimidine metabolism; UMP biosynthesis via de novo pathway; orotate from (S)-dihydroorotate (NAD(+) route): step 1/1. Responsible for channeling the electrons from the oxidation of dihydroorotate from the FMN redox center in the PyrD type B subunit to the ultimate electron acceptor NAD(+). The polypeptide is Probable dihydroorotate dehydrogenase B (NAD(+)), electron transfer subunit (Methanosarcina mazei (strain ATCC BAA-159 / DSM 3647 / Goe1 / Go1 / JCM 11833 / OCM 88) (Methanosarcina frisia)).